The sequence spans 360 residues: ELAV-like protein 2 (360 aa).

Residues 1 to 36 (METQLSNGPTCNNTANGPTTVNNNCSSPVDSGNTED) are disordered. 2 RRM domains span residues 39 to 117 (TNLI…YARP) and 125 to 205 (ANLY…FANN). A Phosphoserine modification is found at Ser221. Residues 277-355 (WCIFVYNLAP…RVLQVSFKTN (79 aa)) enclose the RRM 3 domain.

The protein belongs to the RRM elav family. As to quaternary structure, interacts with IGF2BP1. Interacts with MAP1B light chain LC1. As to expression, brain; neural-specific. Expressed in the hippocampus.

RNA-binding protein that binds to the 3' untranslated region (3'UTR) of target mRNAs. Seems to recognize a GAAA motif. Can bind to its own 3'UTR, the FOS 3'UTR and the ID 3'UTR. The sequence is that of ELAV-like protein 2 (Elavl2) from Mus musculus (Mouse).